Here is a 193-residue protein sequence, read N- to C-terminus: 7-methyl-GTP pyrophosphatase (193 aa).

Asp70 serves as the catalytic Proton acceptor.

The protein belongs to the Maf family. YceF subfamily. A divalent metal cation serves as cofactor.

The protein localises to the cytoplasm. It carries out the reaction N(7)-methyl-GTP + H2O = N(7)-methyl-GMP + diphosphate + H(+). Nucleoside triphosphate pyrophosphatase that hydrolyzes 7-methyl-GTP (m(7)GTP). May have a dual role in cell division arrest and in preventing the incorporation of modified nucleotides into cellular nucleic acids. The protein is 7-methyl-GTP pyrophosphatase of Aliivibrio fischeri (strain ATCC 700601 / ES114) (Vibrio fischeri).